The following is a 620-amino-acid chain: Chaperone protein HscA homolog (620 aa).

The protein belongs to the heat shock protein 70 family.

Functionally, chaperone involved in the maturation of iron-sulfur cluster-containing proteins. Has a low intrinsic ATPase activity which is markedly stimulated by HscB. The chain is Chaperone protein HscA homolog from Pseudomonas entomophila (strain L48).